The sequence spans 352 residues: Homoserine O-acetyltransferase (352 aa).

The 294-residue stretch at 37–330 (NAVLVCHALT…APHGHDTFLI (294 aa)) folds into the AB hydrolase-1 domain. S133 serves as the catalytic Nucleophile. Substrate is bound at residue R206. Residues D296 and H325 contribute to the active site. A substrate-binding site is contributed by D326.

Belongs to the AB hydrolase superfamily. MetX family. As to quaternary structure, homodimer.

It localises to the cytoplasm. The catalysed reaction is L-homoserine + acetyl-CoA = O-acetyl-L-homoserine + CoA. It participates in amino-acid biosynthesis; L-methionine biosynthesis via de novo pathway; O-acetyl-L-homoserine from L-homoserine: step 1/1. Transfers an acetyl group from acetyl-CoA to L-homoserine, forming acetyl-L-homoserine. This chain is Homoserine O-acetyltransferase, found in Salinibacter ruber (strain DSM 13855 / M31).